The primary structure comprises 267 residues: Phosphonates import ATP-binding protein PhnC 2 (267 aa).

The 245-residue stretch at 3–247 folds into the ABC transporter domain; sequence LSLDGVDLVH…ALDALYANEQ (245 aa). An ATP-binding site is contributed by 36-43; sequence GPSGAGKT.

The protein belongs to the ABC transporter superfamily. Phosphonates importer (TC 3.A.1.9.1) family. The complex is composed of two ATP-binding proteins (PhnC), two transmembrane proteins (PhnE) and a solute-binding protein (PhnD).

The protein localises to the cell inner membrane. It carries out the reaction phosphonate(out) + ATP + H2O = phosphonate(in) + ADP + phosphate + H(+). Its function is as follows. Part of the ABC transporter complex PhnCDE involved in phosphonates import. Responsible for energy coupling to the transport system. The chain is Phosphonates import ATP-binding protein PhnC 2 from Pseudomonas aeruginosa (strain UCBPP-PA14).